The following is a 396-amino-acid chain: Acetate kinase (396 aa).

Mg(2+) is bound at residue Asn7. Lys14 is an ATP binding site. Arg88 is a substrate binding site. The Proton donor/acceptor role is filled by Asp145. ATP contacts are provided by residues 205–209 (HLGNG), 279–281 (DFR), and 327–331 (GIGEN). Glu381 provides a ligand contact to Mg(2+).

The protein belongs to the acetokinase family. In terms of assembly, homodimer. Mg(2+) is required as a cofactor. It depends on Mn(2+) as a cofactor.

Its subcellular location is the cytoplasm. The enzyme catalyses acetate + ATP = acetyl phosphate + ADP. Its pathway is metabolic intermediate biosynthesis; acetyl-CoA biosynthesis; acetyl-CoA from acetate: step 1/2. Catalyzes the formation of acetyl phosphate from acetate and ATP. Can also catalyze the reverse reaction. The chain is Acetate kinase from Campylobacter jejuni (strain RM1221).